The primary structure comprises 180 residues: Shikimate kinase (180 aa).

Position 19–24 (19–24 (GAGKTT)) interacts with ATP. Thr-23 lines the Mg(2+) pocket. The substrate site is built by Asp-41, Arg-65, and Gly-87. Residue Arg-125 participates in ATP binding. Arg-144 provides a ligand contact to substrate.

The protein belongs to the shikimate kinase family. In terms of assembly, monomer. Mg(2+) is required as a cofactor.

It is found in the cytoplasm. The catalysed reaction is shikimate + ATP = 3-phosphoshikimate + ADP + H(+). It participates in metabolic intermediate biosynthesis; chorismate biosynthesis; chorismate from D-erythrose 4-phosphate and phosphoenolpyruvate: step 5/7. Catalyzes the specific phosphorylation of the 3-hydroxyl group of shikimic acid using ATP as a cosubstrate. The chain is Shikimate kinase from Acinetobacter baylyi (strain ATCC 33305 / BD413 / ADP1).